Consider the following 444-residue polypeptide: Xylose isomerase (444 aa).

Active-site residues include H101 and D104. Mg(2+)-binding residues include E232, E268, H271, D296, D307, D309, and D339.

This sequence belongs to the xylose isomerase family. In terms of assembly, homotetramer. The cofactor is Mg(2+).

The protein localises to the cytoplasm. The catalysed reaction is alpha-D-xylose = alpha-D-xylulofuranose. In Thermotoga sp. (strain RQ2), this protein is Xylose isomerase.